Here is a 581-residue protein sequence, read N- to C-terminus: Interleukin-22 receptor subunit alpha-1 (581 aa).

Residues 1-15 (MKTLLTILTVGSLAA) form the signal peptide. Residues 16–230 (HTTVDTSGLL…TLPDRTWAYS (215 aa)) lie on the Extracellular side of the membrane. Fibronectin type-III domains lie at 18 to 115 (TVDT…RFSS) and 141 to 221 (PTLT…RVKT). Cys71 and Cys79 are disulfide-bonded. Residues Asn80 and Asn172 are each glycosylated (N-linked (GlcNAc...) asparagine). Cysteines 128 and 217 form a disulfide. A helical transmembrane segment spans residues 231–251 (FSGAVLFSMGFLVGLLCYLGY). Residues 252-581 (KYITKPPVPP…GLALTVQWES (330 aa)) lie on the Cytoplasmic side of the membrane. Residues 343–364 (QQTLSPPSYAPKAVPEVQPPSY) are disordered. Phosphoserine; by GSK3-beta is present on residues Ser410 and Ser414. A Glycyl lysine isopeptide (Lys-Gly) (interchain with G-Cter in ubiquitin) cross-link involves residue Lys449.

It belongs to the type II cytokine receptor family. As to quaternary structure, heterodimer with IL10RB and with IL20RB. Post-translationally, phosphorylated by GSK3-BETA and MAPK; phosphorylation by GSK3-BETA stabilizes IL22RA1 by preventing its proteasomal degradation. In terms of tissue distribution, expressed in kidney, liver and lung.

The protein resides in the cell membrane. Functionally, component of the receptor for IL20, IL22 and IL24. Component of IL22 receptor formed by IL22RA1 and IL10RB enabling IL22 signaling via JAK/STAT pathways. IL22 also induces activation of MAPK1/MAPK3 and Akt kinases pathways. Component of one of the receptor for IL20 and IL24 formed by IL22RA1 and IL20RB also signaling through STATs activation. Mediates IL24 antiangiogenic activity as well as IL24 inhibitory effect on endothelial cell tube formation and differentiation. This Mus musculus (Mouse) protein is Interleukin-22 receptor subunit alpha-1 (Il22ra1).